We begin with the raw amino-acid sequence, 571 residues long: Zinc metalloproteinase-disintegrin-like jararhagin (571 aa).

Positions 1 to 150 (ATRPKGAVQP…KKASQLAFTA (150 aa)) are excised as a propeptide. Glutamate 151 bears the Pyrrolidone carboxylic acid (Glu) mark. Residues 159 to 355 (KYIEFFVVVD…HNPECIINEP (197 aa)) form the Peptidase M12B domain. Ca(2+) is bound by residues glutamate 162 and aspartate 246. 3 cysteine pairs are disulfide-bonded: cysteine 270/cysteine 350, cysteine 310/cysteine 334, and cysteine 312/cysteine 317. Histidine 295 is a binding site for Zn(2+). Residue glutamate 296 is part of the active site. The Zn(2+) site is built by histidine 299 and histidine 305. Residue asparagine 333 is glycosylated (N-linked (GlcNAc...) asparagine). The Ca(2+) site is built by cysteine 350, asparagine 353, valine 365, asparagine 368, leucine 370, glutamate 372, glutamate 375, and aspartate 378. Residues 363–449 (PPVCGNELLE…ECPADVFHKN (87 aa)) form the Disintegrin domain. Intrachain disulfides connect cysteine 366/cysteine 385, cysteine 366/cysteine 395, cysteine 377/cysteine 390, cysteine 377/cysteine 395, cysteine 379/cysteine 385, cysteine 389/cysteine 412, cysteine 403/cysteine 409, cysteine 408/cysteine 434, cysteine 421/cysteine 441, cysteine 428/cysteine 453, cysteine 428/cysteine 460, cysteine 453/cysteine 465, cysteine 460/cysteine 465, cysteine 472/cysteine 487, cysteine 472/cysteine 522, cysteine 487/cysteine 533, cysteine 500/cysteine 510, cysteine 510/cysteine 517, cysteine 517/cysteine 559, cysteine 522/cysteine 533, cysteine 553/cysteine 564, and cysteine 559/cysteine 564. The D/ECD-tripeptide signature appears at 427-429 (ECD). Residues aspartate 429, proline 430, glutamate 432, aspartate 444, and valine 445 each contribute to the Ca(2+) site.

It belongs to the venom metalloproteinase (M12B) family. P-III subfamily. P-IIIb sub-subfamily. In terms of assembly, monomer (Jararhagin and Jararhagin-C) and dimer (Jaracetin). The cofactor is Zn(2+). In terms of processing, the N-terminus of Jararhagin is blocked. Expressed by the venom gland.

The protein localises to the secreted. It carries out the reaction Cleavage of 10-His-|-Leu-11, 14-Ala-|-Leu-15, 16-Tyr-|-Leu-17 and 24-Phe-|-Phe-25 bonds in insulin B chain.. Inhibited by EDTA, 1,10 phenanthroline and batimastat (a peptidomimetic MMP inhibitor). Functionally, snake venom zinc metalloproteinase-disintegrin-like jararhagin: causes hemorrhage. This is the result of the degradation of sub-endothelial matrix proteins leading to the disruption of the blood vessel endothelium, with accompanying disturbances in platelet function. It is able to degrade von Willebrand factor (vWF) and it hydrolyzes the alpha-chain of fibrinogen (FGA) while leaving the beta and gamma chains unaffected. It inhibits collagen-induced platelet aggregation through the binding to alpha-2/beta-1 integrin (ITGA2/ITGB1) (collagen receptor), and it cleaves the beta-1 subunit of the same integrin, inhibiting platelet interaction and ultimately causing impairment of signal transduction. It has inability to be affected by the plasma inhibitor alpha(2)-macroglobulin. In fibroblasts, it functions as a collagen-mimetic substrate and, in endothelial cells, it causes apoptosis and indirectly inhibits cell proliferation by release of angiostatin-like compounds. It induces a strong pro-inflammatory response characterized by intense leukocyte accumulation and release of cytokines at the site of the injection. Although hemorrhage and edema are a response to the direct effect of this toxin, jararhagin-induced inflammation and necrosis are dependent on macrophages and key pro-inflammatory cytokines or their receptors. It also possesses anti-tumorgenic properties. In terms of biological role, the monomeric form inhibits collagen- and ADP-induced platelet aggregation, but has no effect on glycoprotein Ib-IX-dependent (GP1BA/GP5/GP9) platelet agglutination. Locally activates the early events of an acute inflammatory response as leukocyte rolling and pro-inflammatory cytokine release. Its function is as follows. The dimeric form jaracetin may be a dimeric form of jararhagin-C. It binds to von Willebrand factor (VWF) and induces its interaction with GPIbalpha (GP1BA) (via the vWF A1 domain), resulting in platelet aggregation. Also binds the alpha-2 subunit of the alpha-2/beta-1 (ITGA2/ITGB1) integrin. It potently induces platelet aggregation in citrated platelet-rich plasma. The chain is Zinc metalloproteinase-disintegrin-like jararhagin from Bothrops jararaca (Jararaca).